A 540-amino-acid polypeptide reads, in one-letter code: Chaperonin GroEL (540 aa).

Residues 30 to 33 (TLGP), 87 to 91 (DGTTT), glycine 414, 479 to 481 (NAL), and aspartate 495 contribute to the ATP site.

Belongs to the chaperonin (HSP60) family. In terms of assembly, forms a cylinder of 14 subunits composed of two heptameric rings stacked back-to-back. Interacts with the co-chaperonin GroES.

The protein resides in the cytoplasm. It catalyses the reaction ATP + H2O + a folded polypeptide = ADP + phosphate + an unfolded polypeptide.. Its function is as follows. Together with its co-chaperonin GroES, plays an essential role in assisting protein folding. The GroEL-GroES system forms a nano-cage that allows encapsulation of the non-native substrate proteins and provides a physical environment optimized to promote and accelerate protein folding. The protein is Chaperonin GroEL of Rubrobacter xylanophilus (strain DSM 9941 / JCM 11954 / NBRC 16129 / PRD-1).